The chain runs to 997 residues: MLGLLRRLFDNNEREIARYYKQVVEPVNRLEAEVEKLPDLAAAYRELKEKHEKGASLDELLPMAFALTRESAKRYLGMRHFDVQLIGGAVLHEGKIAEMKTGEGKTLVATLAVALNALTGKGVHVVTVNDYLARRDAEWMGPVYRGLGLSVGVIQHASTPAERRKAYLADVTYVTNSELGFDYLRDNMAISPDQLVLRHDHPLHYAIIDEVDSILIDEARTPLIISGPAEKATDLYYKMAEIAKKLERGLPAEPGVRKEPTGDYTVEEKNRSVHLTLQGIAKAEKLLGIEGLFSPENMELAHMLIQAIRAKELYHRDRDYIVQDGQVIIVDEFTGRLMPGRRYGEGLHQAIEAKEGVRIERENQTLATITYQNFFRLYEKRAGMTGTAKTEEKEFQEIYGMDVVVVPTNRPVIRKDFPDVVYRTEKGKFYAVVEEIAEKYERGQPVLVGTISIEKSERLSQMLKEPRLYLPRLEMRLELFKKASQKQQGPEWERLRKLLERPAQLKDEDLAPFEGLIPPKGNLRTAWEGLKRAVHTLAVLRQGIPHQVLNAKHHAREAEIVAQAGRSKTVTIATNMAGRGTDIKLGGNPEYLAAALLEKEGFDRYEWKVELFIKKMVAGKEEEARALAQELGIREELLERIREIREECKQDEERVRALGGLFIIGTERHESRRIDNQLRGRAGRQGDPGGSRFYVSFDDDLMRLFASDRVIAMLDRMGFDDSEPIEHPMVTRSIERAQKRVEDRNFAIRKQLLQFDDVLSRQREVIYAQRRLILLGKDEEVKEAAIGMVEETVASLAENFLNPEVHPEDWDLEGLKATLLDTAPQLQDFPFAELRALKAEEAVERLVEAALKAYEAREAELSPPLMRAVERFVILNVVDNAWKEHLHNLDVLRQGIFLRGYGQKDPFQEYKIEATRLFNEMVAFIKSEVAKFLFRLKVEAEPVRPVREAPYVPVPEAKPEPSEVFGVERKRATPPPQPGLSRAERRRLMRQEKKRKK.

Residues Gln84, 102 to 106, and Asp582 contribute to the ATP site; that span reads GEGKT. A disordered region spans residues 950-997; sequence PYVPVPEAKPEPSEVFGVERKRATPPPQPGLSRAERRRLMRQEKKRKK. Over residues 957–971 the composition is skewed to basic and acidic residues; the sequence is AKPEPSEVFGVERKR. A compositionally biased stretch (basic residues) spans 984 to 997; it reads ERRRLMRQEKKRKK.

This sequence belongs to the SecA family. Part of the essential Sec protein translocation apparatus which comprises SecA, SecYEG and auxiliary proteins SecDF. Other proteins may also be involved. Monomer and homodimer.

It localises to the cell inner membrane. It is found in the cytoplasm. The enzyme catalyses ATP + H2O + cellular proteinSide 1 = ADP + phosphate + cellular proteinSide 2.. Its function is as follows. Part of the Sec protein translocase complex. Interacts with the SecYEG preprotein conducting channel. Has a central role in coupling the hydrolysis of ATP to the transfer of proteins into and across the cell membrane, serving as an ATP-driven molecular motor driving the stepwise translocation of polypeptide chains across the membrane. This chain is Protein translocase subunit SecA, found in Thermus thermophilus (strain ATCC 27634 / DSM 579 / HB8).